We begin with the raw amino-acid sequence, 199 residues long: 7-methyl-GTP pyrophosphatase (199 aa).

The active-site Proton acceptor is the Asp-76.

It belongs to the Maf family. YceF subfamily. Requires a divalent metal cation as cofactor.

It localises to the cytoplasm. The catalysed reaction is N(7)-methyl-GTP + H2O = N(7)-methyl-GMP + diphosphate + H(+). Functionally, nucleoside triphosphate pyrophosphatase that hydrolyzes 7-methyl-GTP (m(7)GTP). May have a dual role in cell division arrest and in preventing the incorporation of modified nucleotides into cellular nucleic acids. The polypeptide is 7-methyl-GTP pyrophosphatase (Hahella chejuensis (strain KCTC 2396)).